The sequence spans 524 residues: Cytochrome P450 704B1 (524 aa).

A helical transmembrane segment spans residues 2-22 (SLCLVIACMVTSWIFLHRWGQ). Cys471 is a binding site for heme.

It belongs to the cytochrome P450 family. The cofactor is heme.

It is found in the membrane. It carries out the reaction an omega-methyl-long-chain fatty acid + reduced [NADPH--hemoprotein reductase] + O2 = an omega-hydroxy-long-chain fatty acid + oxidized [NADPH--hemoprotein reductase] + H2O + H(+). Functionally, involved in pollen wall development. Catalyzes the conversion of long-chain fatty acids to the corresponding omega-hydroxylated fatty acids. Omega-hydroxylated fatty acids, together with in-chain hydroxylated fatty acids, are key monomeric aliphatic building blocks for sporopollenin synthesis during exine formation. The sequence is that of Cytochrome P450 704B1 (CYP704B1) from Arabidopsis thaliana (Mouse-ear cress).